The following is a 417-amino-acid chain: Serine hydroxymethyltransferase 3 (417 aa).

(6S)-5,6,7,8-tetrahydrofolate-binding positions include Leu-121 and 125–127; that span reads GHL. Position 230 is an N6-(pyridoxal phosphate)lysine (Lys-230). 355–357 provides a ligand contact to (6S)-5,6,7,8-tetrahydrofolate; the sequence is SPF.

The protein belongs to the SHMT family. In terms of assembly, homodimer. Requires pyridoxal 5'-phosphate as cofactor.

The protein localises to the cytoplasm. It catalyses the reaction (6R)-5,10-methylene-5,6,7,8-tetrahydrofolate + glycine + H2O = (6S)-5,6,7,8-tetrahydrofolate + L-serine. Its pathway is one-carbon metabolism; tetrahydrofolate interconversion. It functions in the pathway amino-acid biosynthesis; glycine biosynthesis; glycine from L-serine: step 1/1. Its function is as follows. Catalyzes the reversible interconversion of serine and glycine with tetrahydrofolate (THF) serving as the one-carbon carrier. This reaction serves as the major source of one-carbon groups required for the biosynthesis of purines, thymidylate, methionine, and other important biomolecules. Also exhibits THF-independent aldolase activity toward beta-hydroxyamino acids, producing glycine and aldehydes, via a retro-aldol mechanism. The chain is Serine hydroxymethyltransferase 3 from Pseudomonas fluorescens (strain Pf0-1).